Reading from the N-terminus, the 201-residue chain is Putative amino-acid transporter Mb0498 (201 aa).

Transmembrane regions (helical) follow at residues 25 to 45 (VLVI…AGVG), 57 to 77 (MTLV…LLAA), 104 to 124 (LVVT…IGAL), 133 to 153 (WFFG…LGFS), and 169 to 189 (ILDA…LVTS).

It belongs to the LysE/ArgO transporter (TC 2.A.75) family.

The protein resides in the cell membrane. The protein is Putative amino-acid transporter Mb0498 of Mycobacterium bovis (strain ATCC BAA-935 / AF2122/97).